A 344-amino-acid chain; its full sequence is Biotin synthase (344 aa).

Positions 36-260 (NQIQISTLLS…MMPTSYIRLS (225 aa)) constitute a Radical SAM core domain. Residues C51, C55, and C58 each contribute to the [4Fe-4S] cluster site. C95, C126, C186, and R258 together coordinate [2Fe-2S] cluster.

This sequence belongs to the radical SAM superfamily. Biotin synthase family. In terms of assembly, homodimer. Requires [4Fe-4S] cluster as cofactor. [2Fe-2S] cluster serves as cofactor.

It catalyses the reaction (4R,5S)-dethiobiotin + (sulfur carrier)-SH + 2 reduced [2Fe-2S]-[ferredoxin] + 2 S-adenosyl-L-methionine = (sulfur carrier)-H + biotin + 2 5'-deoxyadenosine + 2 L-methionine + 2 oxidized [2Fe-2S]-[ferredoxin]. It functions in the pathway cofactor biosynthesis; biotin biosynthesis; biotin from 7,8-diaminononanoate: step 2/2. Catalyzes the conversion of dethiobiotin (DTB) to biotin by the insertion of a sulfur atom into dethiobiotin via a radical-based mechanism. In Buchnera aphidicola subsp. Baizongia pistaciae (strain Bp), this protein is Biotin synthase.